We begin with the raw amino-acid sequence, 81 residues long: Protein I5 homolog (81 aa).

The next 2 membrane-spanning stretches (helical) occupy residues 8 to 28 and 53 to 73; these read LITIGLTILVVLLIITGFSLV and MEIFSTIMFIPGIIILYAAYI.

This sequence belongs to the Chordopoxvirinae I5 family.

It localises to the virion membrane. The protein is Protein I5 homolog of Vertebrata (FPV).